The primary structure comprises 368 residues: MNKTITALAIMMASFAANASVLPETPVPFKSGTGAIDNDTVYIGLGSAGTAWYKLDTQAKDKKWTALAAFPGGPRDQATSAFIDGNLYVFGGIGKNREGLTQVFNDVHKYNPKTNSWVKLMSHAPMGMAGHVTFVHNGKAYVTGGVNQNIFNGYFEDLNEAGKDSTAVDKINAYYFDKKAEDYFFNKFLLSFDPSTQQWSYAGESPWYGTAGAAVVNKGDKTWLINGEAKPGLRTDAVFELDFTGNNLKWNKLAPVSSPDGVAGGFAGISNDSLIFAGGAGFKGSRENYQHGKNYAHEGLKKSYSTDIHLWHNGKWDKSGELSQGRAYGVSLPWNNSLLIIGGETAGGKAVTDSVLISVKDNKVTVQN.

Positions 1-19 are cleaved as a signal peptide; it reads MNKTITALAIMMASFAANA. Kelch repeat units follow at residues 40–84, 86–137, 139–173, 174–219, 222–265, 287–336, and 338–367; these read TVYI…AFID, NLYV…FVHN, KAYVTGGVNQNIFNGYFEDLNEAGKDSTAVDKINA, YYFD…VNKG, TWLI…VAGG, ENYQ…PWNN, and LLIIGGETAGGKAVTDSVLISVKDNKVTVQ. The active-site Proton acceptor is E228.

Belongs to the NanM family. As to quaternary structure, homodimer.

It localises to the periplasm. It carries out the reaction N-acetyl-alpha-neuraminate = N-acetyl-beta-neuraminate. Its function is as follows. Converts alpha-N-acetylneuranimic acid (Neu5Ac) to the beta-anomer, accelerating the equilibrium between the alpha- and beta-anomers. Probably facilitates sialidase-negative bacteria to compete successfully for limited amounts of extracellular Neu5Ac, which is likely taken up in the beta-anomer. In addition, the rapid removal of sialic acid from solution might be advantageous to the bacterium to damp down host responses. The polypeptide is N-acetylneuraminate epimerase (Shigella boydii serotype 4 (strain Sb227)).